A 360-amino-acid polypeptide reads, in one-letter code: Phospho-N-acetylmuramoyl-pentapeptide-transferase (360 aa).

Helical transmembrane passes span 27 to 47 (GALITAAFIVFLFGPAIISSL), 70 to 90 (GTPTMGGLMIFSGILGSSILW), 93 to 113 (LSSVYVWVVLMVMVGFGAIGF), 134 to 154 (LALEFVIAGFAAWIIMSAGQE), 168 to 188 (LLLNLGIFFIPFAAFVIVGAG), 205 to 225 (VMVAAASFGVIAYLSGNAIFA), 239 to 259 (LSVILGAVIGAGLGFLWFNAP), 262 to 282 (AIFMGDTGSLALGGLIGTVAV), 288 to 308 (IVLAIIGGLFVIEILSVIIQV), and 337 to 357 (QVVIRFWIIAVVLALIGLSTL).

Belongs to the glycosyltransferase 4 family. MraY subfamily. Mg(2+) serves as cofactor.

The protein resides in the cell inner membrane. It carries out the reaction UDP-N-acetyl-alpha-D-muramoyl-L-alanyl-gamma-D-glutamyl-meso-2,6-diaminopimeloyl-D-alanyl-D-alanine + di-trans,octa-cis-undecaprenyl phosphate = di-trans,octa-cis-undecaprenyl diphospho-N-acetyl-alpha-D-muramoyl-L-alanyl-D-glutamyl-meso-2,6-diaminopimeloyl-D-alanyl-D-alanine + UMP. It participates in cell wall biogenesis; peptidoglycan biosynthesis. Catalyzes the initial step of the lipid cycle reactions in the biosynthesis of the cell wall peptidoglycan: transfers peptidoglycan precursor phospho-MurNAc-pentapeptide from UDP-MurNAc-pentapeptide onto the lipid carrier undecaprenyl phosphate, yielding undecaprenyl-pyrophosphoryl-MurNAc-pentapeptide, known as lipid I. The polypeptide is Phospho-N-acetylmuramoyl-pentapeptide-transferase (Chelativorans sp. (strain BNC1)).